Consider the following 476-residue polypeptide: WD repeat, SAM and U-box domain-containing protein 1 (476 aa).

WD repeat units follow at residues 10–47, 52–91, 95–134, 137–176, 178–227, 237–276, and 279–318; these read DHSD…ELPY, GHTY…MLAV, PTGS…FYRS, VKDG…LCNE, AHDL…FLGG, GHSA…ILHT, and QHTR…PCAG. The region spanning 333-396 is the SAM domain; sequence WSEDDVSAWL…LQKIEELRMK (64 aa). Positions 403-476 constitute a U-box domain; sequence AVPDEFLCPI…ISRWLETQQK (74 aa).

The chain is WD repeat, SAM and U-box domain-containing protein 1 (WDSUB1) from Gallus gallus (Chicken).